The sequence spans 61 residues: Conotoxin Am14.1 (61 aa).

2 consecutive propeptides follow at residues 1 to 19 and 52 to 61; these read MLSV…HLPR and KRDLDLFTDQ.

Post-translationally, mostly non-hydroxylated. In terms of processing, contains 2 disulfide bonds. As to expression, expressed by the venom duct.

The protein resides in the secreted. Functionally, probable toxin that inhibits ion channels. The polypeptide is Conotoxin Am14.1 (Conus amadis (Amadis cone)).